Reading from the N-terminus, the 318-residue chain is D-alanine--D-alanine ligase (318 aa).

Positions 101–307 (KKIIQYEGLP…FPDLIEKLVE (207 aa)) constitute an ATP-grasp domain. 135 to 190 (CREMGLPLVVKAPTQGSTIGMSFVHKEEDMAGALELAYDYDPVALVEQFIRGTEVT) is a binding site for ATP. 3 residues coordinate Mg(2+): aspartate 261, glutamate 274, and asparagine 276.

It belongs to the D-alanine--D-alanine ligase family. It depends on Mg(2+) as a cofactor. Mn(2+) is required as a cofactor.

It is found in the cytoplasm. The enzyme catalyses 2 D-alanine + ATP = D-alanyl-D-alanine + ADP + phosphate + H(+). The protein operates within cell wall biogenesis; peptidoglycan biosynthesis. In terms of biological role, cell wall formation. In Pelotomaculum thermopropionicum (strain DSM 13744 / JCM 10971 / SI), this protein is D-alanine--D-alanine ligase.